The sequence spans 568 residues: Autophagy-related protein 17 (568 aa).

Disordered regions lie at residues 1-59 (MASF…DSSE) and 522-568 (SYEM…ERPF). Residues 522 to 546 (SYEMEAHGEPENEGKVETAYERETE) show a composition bias toward basic and acidic residues.

It belongs to the ATG17 family.

The protein resides in the cytoplasm. The protein localises to the preautophagosomal structure membrane. Functionally, autophagy-specific protein that functions in response to autophagy-inducing signals as a scaffold to recruit other ATG proteins to organize pre-autophagosomal structure (PAS) formation. Modulates the timing and magnitude of the autophagy response, such as the size of the sequestering vesicles. Plays particularly a role in pexophagy and nucleophagy. This Neurospora crassa (strain ATCC 24698 / 74-OR23-1A / CBS 708.71 / DSM 1257 / FGSC 987) protein is Autophagy-related protein 17 (apg-9).